The sequence spans 250 residues: Ubiquinone/menaquinone biosynthesis C-methyltransferase UbiE (250 aa).

Residues T74, D94, 122–123 (DA), and S139 each bind S-adenosyl-L-methionine.

This sequence belongs to the class I-like SAM-binding methyltransferase superfamily. MenG/UbiE family.

The catalysed reaction is a 2-demethylmenaquinol + S-adenosyl-L-methionine = a menaquinol + S-adenosyl-L-homocysteine + H(+). It catalyses the reaction a 2-methoxy-6-(all-trans-polyprenyl)benzene-1,4-diol + S-adenosyl-L-methionine = a 5-methoxy-2-methyl-3-(all-trans-polyprenyl)benzene-1,4-diol + S-adenosyl-L-homocysteine + H(+). It participates in quinol/quinone metabolism; menaquinone biosynthesis; menaquinol from 1,4-dihydroxy-2-naphthoate: step 2/2. The protein operates within cofactor biosynthesis; ubiquinone biosynthesis. In terms of biological role, methyltransferase required for the conversion of demethylmenaquinol (DMKH2) to menaquinol (MKH2) and the conversion of 2-polyprenyl-6-methoxy-1,4-benzoquinol (DDMQH2) to 2-polyprenyl-3-methyl-6-methoxy-1,4-benzoquinol (DMQH2). This Roseobacter denitrificans (strain ATCC 33942 / OCh 114) (Erythrobacter sp. (strain OCh 114)) protein is Ubiquinone/menaquinone biosynthesis C-methyltransferase UbiE.